Consider the following 318-residue polypeptide: Ribosomal RNA small subunit methyltransferase A (318 aa).

Asn-40, Val-42, Gly-67, Glu-88, Asp-118, and Asn-137 together coordinate S-adenosyl-L-methionine. Residues 296–305 show a composition bias toward basic and acidic residues; that stretch reads ADRGGSDREG. Residues 296-318 are disordered; sequence ADRGGSDREGTSPPTAGQGAPAC.

It belongs to the class I-like SAM-binding methyltransferase superfamily. rRNA adenine N(6)-methyltransferase family. RsmA subfamily.

The protein resides in the cytoplasm. It carries out the reaction adenosine(1518)/adenosine(1519) in 16S rRNA + 4 S-adenosyl-L-methionine = N(6)-dimethyladenosine(1518)/N(6)-dimethyladenosine(1519) in 16S rRNA + 4 S-adenosyl-L-homocysteine + 4 H(+). Its function is as follows. Specifically dimethylates two adjacent adenosines (A1518 and A1519) in the loop of a conserved hairpin near the 3'-end of 16S rRNA in the 30S particle. May play a critical role in biogenesis of 30S subunits. The sequence is that of Ribosomal RNA small subunit methyltransferase A from Mycobacterium avium (strain 104).